Reading from the N-terminus, the 309-residue chain is MTPRHFLRDDDLSPAEQAEVLALAAELKKDPFSARPLEGPRGVAVLFDKNSTRTRFSFEVGIAQLGGHAVVVDARSTQLGRDETLEDTARVLSRYVEAIVWRTFEQQRLEAMAGAATVPVINALSDEFHPCQMLADLQAIAEHKGSLSGLRMCYLGDGANNMAHSLMLGGVTAGIHVTIAAPDGFTPAPEFVAAARRRAESTGATVTLTTDARAAARGVDVLVTDTWTSMGQEDDGLDRRTPFWPYQLNADLVSLADPEAIVLHCLPAHRGEEITDEVMDGPSSVVWDEAENRLHAQKALLTWLLERQS.

Carbamoyl phosphate is bound by residues Ser51–Thr54, Gln78, Arg102, and His129–Gln132. L-ornithine-binding positions include Asn161, Asp225, and Ser229–Met230. Carbamoyl phosphate contacts are provided by residues Cys265–Leu266 and Arg293.

It belongs to the aspartate/ornithine carbamoyltransferase superfamily. OTCase family.

The protein localises to the cytoplasm. It carries out the reaction carbamoyl phosphate + L-ornithine = L-citrulline + phosphate + H(+). Its pathway is amino-acid biosynthesis; L-arginine biosynthesis; L-arginine from L-ornithine and carbamoyl phosphate: step 1/3. Its function is as follows. Reversibly catalyzes the transfer of the carbamoyl group from carbamoyl phosphate (CP) to the N(epsilon) atom of ornithine (ORN) to produce L-citrulline. The chain is Ornithine carbamoyltransferase from Mycolicibacterium paratuberculosis (strain ATCC BAA-968 / K-10) (Mycobacterium paratuberculosis).